The sequence spans 663 residues: Leishmanolysin-like peptidase (663 aa).

Position 246 (histidine 246) interacts with Zn(2+). Glutamate 247 is an active-site residue. Zn(2+) contacts are provided by histidine 250 and histidine 353.

The protein belongs to the peptidase M8 family. The cofactor is Zn(2+).

It is found in the cytoplasm. Its function is as follows. Essential for the coordination of mitotic progression, and also plays a role in cell migration. The polypeptide is Leishmanolysin-like peptidase (Caenorhabditis elegans).